The primary structure comprises 137 residues: Large ribosomal subunit protein uL16 (137 aa).

This sequence belongs to the universal ribosomal protein uL16 family. As to quaternary structure, part of the 50S ribosomal subunit.

Binds 23S rRNA and is also seen to make contacts with the A and possibly P site tRNAs. The protein is Large ribosomal subunit protein uL16 of Chelativorans sp. (strain BNC1).